The primary structure comprises 143 residues: Large ribosomal subunit protein uL11 (143 aa).

It belongs to the universal ribosomal protein uL11 family. As to quaternary structure, part of the ribosomal stalk of the 50S ribosomal subunit. Interacts with L10 and the large rRNA to form the base of the stalk. L10 forms an elongated spine to which L12 dimers bind in a sequential fashion forming a multimeric L10(L12)X complex. In terms of processing, one or more lysine residues are methylated.

In terms of biological role, forms part of the ribosomal stalk which helps the ribosome interact with GTP-bound translation factors. This chain is Large ribosomal subunit protein uL11, found in Verminephrobacter eiseniae (strain EF01-2).